The sequence spans 409 residues: Lissencephaly-1 homolog (409 aa).

A LisH domain is found at 7-39 (QEEELRFAVADYLQSCGYTNALEAFKKDASIPK). Residues 56-81 (SVVRLQKKVMDLELRLNNTTREMNSG) are a coiled coil. The segment covering 75–92 (TREMNSGVPTRNSRSSND) has biased composition (polar residues). The segment at 75–105 (TREMNSGVPTRNSRSSNDWIPRPPEKHSLSG) is disordered. 7 WD repeats span residues 105–146 (GHRS…RTLR), 147–186 (GHTDSVQDLAFDSSGKLLASSSADMTVKIWDFQTFECRMT), 189–228 (GHDHNVSSVCFLPSGDFLLSSSRDKTIKMWEVATGYCVYN), 231–270 (GHREWVRRVAVASDGSLMASCSNDQTVRIWSLSSKECKEE), 273–332 (GHEH…CLFS), 335–374 (GHDNWVRGLAFHAGGKYLTSASDDKTIKIWELRHKRCSKS), and 377–409 (AHNHFVTTIDFHRSSPFVITGSVDLTIKVWECR).

Belongs to the WD repeat LIS1/nudF family.

It localises to the cytoplasm. The protein localises to the cytoskeleton. Its subcellular location is the microtubule organizing center. It is found in the centrosome. Its function is as follows. Positively regulates the activity of the minus-end directed microtubule motor protein dynein. May enhance dynein-mediated microtubule sliding by targeting dynein to the microtubule plus end. Required for several dynein- and microtubule-dependent processes. The chain is Lissencephaly-1 homolog from Trichoplax adhaerens (Trichoplax reptans).